A 516-amino-acid chain; its full sequence is Cyclic AMP response element-binding protein A (516 aa).

3 positions are modified to phosphoserine: Ser-75, Ser-79, and Ser-82. Disordered stretches follow at residues 213–237 (KDEPMSPDSSCPASPTSQASSSQHQ), 294–338 (KSEK…HLFA), and 353–408 (PAGG…KGST). The segment covering 221–237 (SSCPASPTSQASSSQHQ) has biased composition (low complexity). Low complexity predominate over residues 361–392 (RVSRTAASITRSSSGSASASGSSTSSTVTTTR). Residues 441 to 504 (SLKKIRRKIK…ANLLSQLHKL (64 aa)) form the bZIP domain. The interval 443 to 463 (KKIRRKIKNKISAQESRRKKK) is basic motif. Positions 469–476 (LERRVEIL) are leucine-zipper.

It belongs to the bZIP family. May bind DNA as heterodimers with other bZIP proteins. In all cell types examined, including developing salivary gland in embryos and in adults, brain and optic lobe cell bodies, salivary gland, midgut epithelial cells of the cardia, female ovarian columnar follicle cells and male seminal vesicle, ejaculatory duct, and ejaculatory bulb.

It is found in the nucleus. Functionally, transcriptional activator. Binds to fat body-specific enhancers of alcohol dehydrogenase (ADH) and yolk protein genes. BBF-2 may play a role in fat body gene expression. It binds the consensus sequence 5'-T[AC]NACGTAN[TG]C-3'. The chain is Cyclic AMP response element-binding protein A (CrebA) from Drosophila melanogaster (Fruit fly).